The primary structure comprises 317 residues: Melanocyte-stimulating hormone receptor (317 aa).

Over Met1 to Glu37 the chain is Extracellular. A glycan (N-linked (GlcNAc...) asparagine) is linked at Asn29. The helical transmembrane segment at Val38–Ile63 threads the bilayer. At Ala64 to Pro72 the chain is on the cytoplasmic side. Residues Met73–Leu93 traverse the membrane as a helical segment. Over Glu94–Asn118 the chain is Extracellular. A helical membrane pass occupies residues Thr119–Val140. Residues Asp141 to Arg163 lie on the Cytoplasmic side of the membrane. A helical transmembrane segment spans residues Ala164–Cys183. Residues Asp184 to Cys191 are Extracellular-facing. The chain crosses the membrane as a helical span at residues Leu192–Leu211. Residues Ala212 to Ala240 are Cytoplasmic-facing. A helical transmembrane segment spans residues Ala241–Leu266. The Extracellular segment spans residues Cys267 to Asn279. A helical transmembrane segment spans residues Phe280–Phe300. Topologically, residues Arg301–Trp317 are cytoplasmic. Cys315 is lipidated: S-palmitoyl cysteine.

The protein belongs to the G-protein coupled receptor 1 family. In terms of assembly, interacts with MGRN1, but does not undergo MGRN1-mediated ubiquitination; this interaction competes with GNAS-binding and thus inhibits agonist-induced cAMP production. Interacts with OPN3; the interaction results in a decrease in MC1R-mediated cAMP signaling and ultimately a decrease in melanin production in melanocytes.

The protein resides in the cell membrane. Receptor for MSH (alpha, beta and gamma) and ACTH. The activity of this receptor is mediated by G proteins which activate adenylate cyclase. Mediates melanogenesis, the production of eumelanin (black/brown) and phaeomelanin (red/yellow), via regulation of cAMP signaling in melanocytes. The polypeptide is Melanocyte-stimulating hormone receptor (MC1R) (Alouatta sara (Bolivian red howler monkey)).